The chain runs to 166 residues: Mitochondrial fission process protein 1 (166 aa).

Transmembrane regions (helical) follow at residues S34–A54 and A78–F98. Residue K123 is modified to N6-succinyllysine. A helical transmembrane segment spans residues L129–L149.

Belongs to the MTFP1 family.

Its subcellular location is the mitochondrion inner membrane. In terms of biological role, involved in the mitochondrial division probably by regulating membrane fission. Loss-of-function leads to apoptosis. This Mus musculus (Mouse) protein is Mitochondrial fission process protein 1 (Mtfp1).